The sequence spans 210 residues: ATP-dependent Clp protease proteolytic subunit (210 aa).

Ser-111 serves as the catalytic Nucleophile. His-136 is an active-site residue.

The protein belongs to the peptidase S14 family. As to quaternary structure, fourteen ClpP subunits assemble into 2 heptameric rings which stack back to back to give a disk-like structure with a central cavity, resembling the structure of eukaryotic proteasomes.

Its subcellular location is the cytoplasm. The catalysed reaction is Hydrolysis of proteins to small peptides in the presence of ATP and magnesium. alpha-casein is the usual test substrate. In the absence of ATP, only oligopeptides shorter than five residues are hydrolyzed (such as succinyl-Leu-Tyr-|-NHMec, and Leu-Tyr-Leu-|-Tyr-Trp, in which cleavage of the -Tyr-|-Leu- and -Tyr-|-Trp bonds also occurs).. Its function is as follows. Cleaves peptides in various proteins in a process that requires ATP hydrolysis. Has a chymotrypsin-like activity. Plays a major role in the degradation of misfolded proteins. The sequence is that of ATP-dependent Clp protease proteolytic subunit from Halorhodospira halophila (strain DSM 244 / SL1) (Ectothiorhodospira halophila (strain DSM 244 / SL1)).